Consider the following 344-residue polypeptide: L-rhamnose-proton symporter (344 aa).

The next 10 helical transmembrane spans lie at 4–24 (PILL…CFYA), 38–58 (WSLG…WWLL), 68–88 (FDMA…IGNI), 101–121 (MGIG…TPVL), 137–157 (TLLG…AGLL), 175–195 (LILA…MDAA), 207–227 (INAL…GAVV), 255–275 (LIAN…QFFF), 290–310 (ISWM…GLLF), and 324–344 (LVLG…GMAA).

The protein belongs to the L-rhamnose transporter (TC 2.A.7.6) family.

The protein localises to the cell inner membrane. The catalysed reaction is L-rhamnopyranose(in) + H(+)(in) = L-rhamnopyranose(out) + H(+)(out). Functionally, uptake of L-rhamnose across the cytoplasmic membrane with the concomitant transport of protons into the cell (symport system). The sequence is that of L-rhamnose-proton symporter from Pectobacterium carotovorum subsp. carotovorum (strain PC1).